The primary structure comprises 255 residues: Pyrroloquinoline-quinone synthase (255 aa).

This sequence belongs to the PqqC family.

It carries out the reaction 6-(2-amino-2-carboxyethyl)-7,8-dioxo-1,2,3,4,7,8-hexahydroquinoline-2,4-dicarboxylate + 3 O2 = pyrroloquinoline quinone + 2 H2O2 + 2 H2O + H(+). It functions in the pathway cofactor biosynthesis; pyrroloquinoline quinone biosynthesis. Functionally, ring cyclization and eight-electron oxidation of 3a-(2-amino-2-carboxyethyl)-4,5-dioxo-4,5,6,7,8,9-hexahydroquinoline-7,9-dicarboxylic-acid to PQQ. The sequence is that of Pyrroloquinoline-quinone synthase from Cereibacter sphaeroides (strain KD131 / KCTC 12085) (Rhodobacter sphaeroides).